The following is a 91-amino-acid chain: uncharacterized protein (91 aa).

The Integrase catalytic domain maps to Met1 to Ile91.

This is an uncharacterized protein from Haemophilus influenzae (strain ATCC 51907 / DSM 11121 / KW20 / Rd).